A 115-amino-acid polypeptide reads, in one-letter code: MWRENKGFSTIETMSALSLWLFVLLTVVPLWDKLMADEKMAESREIGYQMMNESISKYVMSGEGAASKTITKNNHIYAMKWEEEGEYQNVCIKAAAYKEKSFCLSILQTEWLHAS.

Residues 1–7 (MWRENKG) constitute a propeptide, leader sequence. At Phe-8 the chain carries N-methylphenylalanine. Residues 13–31 (TMSALSLWLFVLLTVVPLW) traverse the membrane as a helical segment.

Processing of ComGE in competent cells requires ComC.

Its subcellular location is the cell membrane. It is found in the cell surface. In terms of biological role, required for transformation and DNA binding. The sequence is that of ComG operon protein 5 (comGE) from Bacillus subtilis (strain 168).